Consider the following 163-residue polypeptide: Ribosome maturation factor RimP (163 aa).

It belongs to the RimP family.

It is found in the cytoplasm. In terms of biological role, required for maturation of 30S ribosomal subunits. In Streptococcus mutans serotype c (strain ATCC 700610 / UA159), this protein is Ribosome maturation factor RimP.